The chain runs to 291 residues: 4-hydroxy-tetrahydrodipicolinate synthase (291 aa).

Threonine 44 provides a ligand contact to pyruvate. Tyrosine 132 serves as the catalytic Proton donor/acceptor. Residue lysine 160 is the Schiff-base intermediate with substrate of the active site. A pyruvate-binding site is contributed by valine 202.

The protein belongs to the DapA family. As to quaternary structure, homotetramer; dimer of dimers.

Its subcellular location is the cytoplasm. It catalyses the reaction L-aspartate 4-semialdehyde + pyruvate = (2S,4S)-4-hydroxy-2,3,4,5-tetrahydrodipicolinate + H2O + H(+). It participates in amino-acid biosynthesis; L-lysine biosynthesis via DAP pathway; (S)-tetrahydrodipicolinate from L-aspartate: step 3/4. Its function is as follows. Catalyzes the condensation of (S)-aspartate-beta-semialdehyde [(S)-ASA] and pyruvate to 4-hydroxy-tetrahydrodipicolinate (HTPA). This is 4-hydroxy-tetrahydrodipicolinate synthase from Clostridium perfringens (strain SM101 / Type A).